The sequence spans 915 residues: MAPSSPSSARPTRASGRERSAMAEEIHQNQEEEEEVVAASTAKRRRKAASSGKKPKPTPKQAKPAVAGMKKKGETEKTEPVVDDVCAEEPDEEELAMGEEEAEAEEQAMQEVVAAVAAGSPGKKRVGRRSAAASGDHVPEFIGSPVGAAEAHSNWPKRYERSTAANKPEEDDELKARCHYRSAKVDNIVYCLGDDVYVKAGENEADYIGRITEFFEGTDRCHYFTCRWFFRAEDTVINSLVSINVDGHKHDPRRVFLSEEKNDNVLDCIISKVKIVHVDPNMDPKAKAQLIEHCDLYYDMSYSVAYSTFANISSENGQSGSETASGISSDDAGLETSSNMPERTATLLDLYSGCGGMSTGLCLGAALSGLKLETRWAVDLNSFACQSLKYNHPQTEVRNEKADEFLALLKEWAVLCEKYVHQDVDSNLAGSEDQEDADTLDKDEFVVQKLIGIRYDGTGRKKGVYFKVQWEEYGPEEDTWEPIDNLSDCPLKIREFVQEGRKRKILPLPGDVDVICGGPPCQGISGFNRFRNRDEPLKDEKNKQMVTFMDIVAYLKPKYVLMENVVDILKFADGYLGKYALSCLVAMKYQARLGMMVAGCYGLPQFRMRVFLWGALSSMVLPKYPLPTYDVVVRGGAPNAFSQCMVAYDETQRPSLKKALLLGDAFSDLPKVENHQPNDVMEYGGSPKTEFQRYIRLGRKDMLDWSFGEEAGPDEGKLLDHQPLRLNNDDYERVKQIPVKKGANFRDLKGVKVGANNVVEWDPEVERVYLSSGKPLVPDYAMSFIKGKSLKPFGRLWWDQTVPTVVTRAEPHNQVILHPTQARVLTIRENARLQGFPDYYRLFGPIKEKYIQVGNAVAVPVARALGYCLGQAYLGESDGSQPLYQLPASFTSVGRTAVQANAASVGTPAGEVVEQ.

The segment covering 1–14 (MAPSSPSSARPTRA) has biased composition (low complexity). The segment at 1–171 (MAPSSPSSAR…STAANKPEED (171 aa)) is disordered. Residues 15–30 (SGRERSAMAEEIHQNQ) show a composition bias toward basic and acidic residues. Basic residues predominate over residues 42–57 (AKRRRKAASSGKKPKP). A compositionally biased stretch (basic and acidic residues) spans 71–80 (KKGETEKTEP). Acidic residues predominate over residues 81 to 108 (VVDDVCAEEPDEEELAMGEEEAEAEEQA). Positions 109–119 (MQEVVAAVAAG) are enriched in low complexity. A BAH domain is found at 188 to 313 (IVYCLGDDVY…VAYSTFANIS (126 aa)). Polar residues predominate over residues 315-328 (ENGQSGSETASGIS). Positions 315–338 (ENGQSGSETASGISSDDAGLETSS) are disordered. One can recognise an SAM-dependent MTase C5-type domain in the interval 345–876 (ATLLDLYSGC…YCLGQAYLGE (532 aa)). The Chromo domain occupies 445–508 (FVVQKLIGIR…EGRKRKILPL (64 aa)). The active site involves Cys-521.

Belongs to the class I-like SAM-binding methyltransferase superfamily. C5-methyltransferase family.

The protein localises to the nucleus. It catalyses the reaction a 2'-deoxycytidine in DNA + S-adenosyl-L-methionine = a 5-methyl-2'-deoxycytidine in DNA + S-adenosyl-L-homocysteine + H(+). Functionally, may be involved in the CpXpG methylation and in gene silencing. The sequence is that of DNA (cytosine-5)-methyltransferase 2 (ZMET5) from Zea mays (Maize).